The primary structure comprises 238 residues: uncharacterized protein (238 aa).

3 consecutive transmembrane segments (helical) span residues 19 to 39, 79 to 99, and 141 to 161; these read IVIEAFPGTGLVGSIAGFQII, IILFSDIIISPFKINGLAEFI, and YVEIFDFGVVGGMGGNLLIKC.

The protein localises to the cell membrane. This is an uncharacterized protein from Methanocaldococcus jannaschii (strain ATCC 43067 / DSM 2661 / JAL-1 / JCM 10045 / NBRC 100440) (Methanococcus jannaschii).